The following is a 295-amino-acid chain: Probable protein phosphatase 2C 6 (295 aa).

A PPM-type phosphatase domain is found at 23–294 (QYAATHMQGW…DNMTCILIQF (272 aa)). Residues aspartate 57, glycine 58, aspartate 237, and aspartate 285 each contribute to the Mn(2+) site.

This sequence belongs to the PP2C family. It depends on Mg(2+) as a cofactor. Requires Mn(2+) as cofactor.

It is found in the membrane. It carries out the reaction O-phospho-L-seryl-[protein] + H2O = L-seryl-[protein] + phosphate. It catalyses the reaction O-phospho-L-threonyl-[protein] + H2O = L-threonyl-[protein] + phosphate. Enzyme with a broad specificity. The polypeptide is Probable protein phosphatase 2C 6 (Paramecium tetraurelia).